Consider the following 361-residue polypeptide: Peptide chain release factor 1 (361 aa).

Glutamine 240 is subject to N5-methylglutamine.

Belongs to the prokaryotic/mitochondrial release factor family. In terms of processing, methylated by PrmC. Methylation increases the termination efficiency of RF1.

It is found in the cytoplasm. Its function is as follows. Peptide chain release factor 1 directs the termination of translation in response to the peptide chain termination codons UAG and UAA. In Mycobacterium leprae (strain Br4923), this protein is Peptide chain release factor 1.